A 172-amino-acid polypeptide reads, in one-letter code: uncharacterized protein (172 aa).

The PfpI endopeptidase domain occupies 3-171; that stretch reads KKVAIILTNE…FNREIVNQLN (169 aa).

The protein belongs to the peptidase C56 family.

This is an uncharacterized protein from Staphylococcus saprophyticus subsp. saprophyticus (strain ATCC 15305 / DSM 20229 / NCIMB 8711 / NCTC 7292 / S-41).